A 279-amino-acid polypeptide reads, in one-letter code: NADH dehydrogenase [ubiquinone] iron-sulfur protein 3, mitochondrial (279 aa).

Residues 1–27 (MISRTLLKRSLPTVQFLRPFTRSSIRR) constitute a mitochondrion transit peptide. The disordered stretch occupies residues 249-279 (EPVGEGKDFTPESFKLPTPEPEPEKESDEKK). A compositionally biased stretch (basic and acidic residues) spans 270–279 (EPEKESDEKK).

It belongs to the complex I 30 kDa subunit family. As to quaternary structure, core subunit of respiratory chain NADH dehydrogenase (Complex I).

The protein localises to the mitochondrion inner membrane. It catalyses the reaction a ubiquinone + NADH + 5 H(+)(in) = a ubiquinol + NAD(+) + 4 H(+)(out). In terms of biological role, core subunit of the mitochondrial membrane respiratory chain NADH dehydrogenase (Complex I) which catalyzes electron transfer from NADH through the respiratory chain, using ubiquinone as an electron acceptor. Plays a role in cell wall integrity and is involved in osmotic and oxidative resistance, yeast to hypha transition and the ability to damage and invade oral epithelial cells. This is NADH dehydrogenase [ubiquinone] iron-sulfur protein 3, mitochondrial (ALI1) from Candida albicans (strain SC5314 / ATCC MYA-2876) (Yeast).